The following is a 151-amino-acid chain: Aspartate carbamoyltransferase regulatory chain (151 aa).

Positions 107, 112, 135, and 138 each coordinate Zn(2+).

It belongs to the PyrI family. In terms of assembly, contains catalytic and regulatory chains. It depends on Zn(2+) as a cofactor.

Involved in allosteric regulation of aspartate carbamoyltransferase. This Psychromonas ingrahamii (strain DSM 17664 / CCUG 51855 / 37) protein is Aspartate carbamoyltransferase regulatory chain.